The sequence spans 115 residues: Large ribosomal subunit protein bL19 (115 aa).

Belongs to the bacterial ribosomal protein bL19 family.

Its function is as follows. This protein is located at the 30S-50S ribosomal subunit interface and may play a role in the structure and function of the aminoacyl-tRNA binding site. The protein is Large ribosomal subunit protein bL19 of Thermosipho africanus (strain TCF52B).